The sequence spans 315 residues: Ankyrin repeat domain-containing protein SOWAHD (315 aa).

A disordered region spans residues 1-39; the sequence is MAQLGGAANRAPTASLAPTSQSLRCAPQPRPSRADTGSL. ANK repeat units follow at residues 112–141, 147–162, and 186–216; these read PREH…ELLL, TGYS…GRHE, and GGLT…DATR.

Belongs to the SOWAH family.

In Homo sapiens (Human), this protein is Ankyrin repeat domain-containing protein SOWAHD (SOWAHD).